The following is a 639-amino-acid chain: Chaperone protein DnaK (639 aa).

The residue at position 199 (T199) is a Phosphothreonine; by autocatalysis. Low complexity predominate over residues 602 to 613 (AQAQQAAAGAEG). The tract at residues 602–639 (AQAQQAAAGAEGQPEDASAKQDDDVVDAEFEEVKDDKK) is disordered. Residues 625-639 (DVVDAEFEEVKDDKK) show a composition bias toward acidic residues.

It belongs to the heat shock protein 70 family.

Its function is as follows. Acts as a chaperone. The chain is Chaperone protein DnaK from Pseudoalteromonas atlantica (strain T6c / ATCC BAA-1087).